Consider the following 620-residue polypeptide: Chaperone protein HscA homolog (620 aa).

Belongs to the heat shock protein 70 family.

In terms of biological role, chaperone involved in the maturation of iron-sulfur cluster-containing proteins. Has a low intrinsic ATPase activity which is markedly stimulated by HscB. This Pseudomonas syringae pv. tomato (strain ATCC BAA-871 / DC3000) protein is Chaperone protein HscA homolog.